A 401-amino-acid polypeptide reads, in one-letter code: Probable tRNA sulfurtransferase (401 aa).

The region spanning 60 to 165 (EPIIEKLKTV…QDGTYVTCRD (106 aa)) is the THUMP domain. Residues 183–184 (ML), 208–209 (HF), R265, G287, and Q296 contribute to the ATP site.

The protein belongs to the ThiI family.

It localises to the cytoplasm. The catalysed reaction is [ThiI sulfur-carrier protein]-S-sulfanyl-L-cysteine + a uridine in tRNA + 2 reduced [2Fe-2S]-[ferredoxin] + ATP + H(+) = [ThiI sulfur-carrier protein]-L-cysteine + a 4-thiouridine in tRNA + 2 oxidized [2Fe-2S]-[ferredoxin] + AMP + diphosphate. It carries out the reaction [ThiS sulfur-carrier protein]-C-terminal Gly-Gly-AMP + S-sulfanyl-L-cysteinyl-[cysteine desulfurase] + AH2 = [ThiS sulfur-carrier protein]-C-terminal-Gly-aminoethanethioate + L-cysteinyl-[cysteine desulfurase] + A + AMP + 2 H(+). It participates in cofactor biosynthesis; thiamine diphosphate biosynthesis. Functionally, catalyzes the ATP-dependent transfer of a sulfur to tRNA to produce 4-thiouridine in position 8 of tRNAs, which functions as a near-UV photosensor. Also catalyzes the transfer of sulfur to the sulfur carrier protein ThiS, forming ThiS-thiocarboxylate. This is a step in the synthesis of thiazole, in the thiamine biosynthesis pathway. The sulfur is donated as persulfide by IscS. This chain is Probable tRNA sulfurtransferase, found in Geobacillus kaustophilus (strain HTA426).